Reading from the N-terminus, the 1154-residue chain is Voltage-gated inwardly rectifying potassium channel KCNH2 (1154 aa).

Residues 1–403 (MPVRRGHVAP…RIHRWTILHY (403 aa)) are Cytoplasmic-facing. The PAS domain occupies 41 to 70 (VIYCNDGFCELCGYSRAEVMQRPCTCDFLH). The 53-residue stretch at 92–144 (RKVEIAFYRKDGSCFLCLVDVVPVKNEDGAVIMFILNFEVVMEKDMVGSPARD) folds into the PAC domain. The disordered stretch occupies residues 233-312 (ALVGSGSPPA…ASTGAMHPLR (80 aa)). Ser239 bears the Phosphoserine mark. The span at 258-269 (PDGSGSSCSLAR) shows a compositional bias: polar residues. Ser283, Ser284, Ser320, and Ser351 each carry phosphoserine. A helical transmembrane segment spans residues 404–424 (SPFKAVWDWLILLLVIYTAVF). The Extracellular segment spans residues 425–450 (TPYSAAFLLKETEEGSQAPDCGYACQ). The chain crosses the membrane as a helical span at residues 451–471 (PLAVVDLIVDIMFIVDILINF). The Cytoplasmic portion of the chain corresponds to 472–495 (RTTYVNANEEVVSHPGRIAVHYFK). Residues 496–516 (GWFLIDMVAAIPFDLLIFGSG) form a helical membrane-spanning segment. Residues 517–520 (SEEL) are Extracellular-facing. Residues 521–541 (IGLLKTARLLRLVRVARKLDR) form a helical; Voltage-sensor membrane-spanning segment. Topologically, residues 542–547 (YSEYGA) are cytoplasmic. The chain crosses the membrane as a helical span at residues 548–568 (AVLFLLMCTFALIAHWLACIW). Over 569–611 (YAIGNMEQPNMDSHIGWLHNLGDQIGKPYNSSGLGGPSIKDKY) the chain is Extracellular. Positions 612-632 (VTALYFTFSSLTSVGFGNVSP) form an intramembrane region, pore-forming. A Selectivity filter motif is present at residues 624-629 (SVGFGN). Topologically, residues 633–638 (NTNSEK) are extracellular. Residues 639–659 (IFSICVMLIGSLMYASIFGNV) form a helical membrane-spanning segment. The Cytoplasmic segment spans residues 660–1154 (SAIIQRLYSG…LHRHGSDPGS (495 aa)). The cNMP-binding domain stretch occupies residues 742-842 (PFRGATKGCL…IHRDDLLEVL (101 aa)). Residues 870 to 985 (GSPGSTELEG…DVEKSSDTCN (116 aa)) form a disordered region. A phosphoserine mark is found at Ser871 and Ser874. Over residues 883 to 892 (RQRKRKLSFR) the composition is skewed to basic residues. Over residues 916 to 927 (GPSGRGQQGGPW) the composition is skewed to gly residues. A compositionally biased stretch (low complexity) spans 928–939 (GESLSSGPSSPE). Arg1014 carries the omega-N-methylarginine modification. Residues 1037 to 1064 (RGDVESRLDALQRQLNRLETRLSADMAT) are a coiled coil. The interval 1125–1154 (DGPARRLSLPGQLGALTSQPLHRHGSDPGS) is disordered. At Ser1132 the chain carries Phosphoserine.

This sequence belongs to the potassium channel family. H (Eag) (TC 1.A.1.20) subfamily. Kv11.1/KCNH2 sub-subfamily. As to quaternary structure, the potassium channel is probably composed of a homo- or heterotetrameric complex of pore-forming alpha subunits that can associate with modulating beta subunits. Interacts with DNAJB12 and DNAJB14; chaperones DNAJB12 and DNAJB14 promote tetramerization. Heteromultimer with KCNH6/ERG2 and KCNH7/ERG3. Interacts with ALG10B. Forms a stable complex with KCNE1 or KCNE2, and that this heteromultimerization regulates Inward rectifier potassium channel activity. Interacts with CANX. The core-glycosylated, but not the fully glycosylated form interacts with RNF207. Interacts with NDFIP1 and NDFIP2; this interaction decreases the cell membrane expression by targeting KCNH2, through interaction with NEDD4L, for the degradation through the multivesicular bodies (MVBs)-lysosomal pathway. Post-translationally, phosphorylated on serine and threonine residues. Phosphorylation by PKA inhibits ion conduction.

It is found in the cell membrane. It carries out the reaction K(+)(in) = K(+)(out). Its function is as follows. Pore-forming (alpha) subunit of voltage-gated inwardly rectifying potassium channel. Characterized by unusual gating kinetics by producing relatively small outward currents during membrane depolarization and large inward currents during subsequent repolarization which reflect a rapid inactivation during depolarization and quick recovery from inactivation but slow deactivation (closing) during repolarization. Channel properties are modulated by cAMP and subunit assembly. Forms a stable complex with KCNE1 or KCNE2, and that this heteromultimerization regulates inward rectifier potassium channel activity. The chain is Voltage-gated inwardly rectifying potassium channel KCNH2 from Sus scrofa (Pig).